Reading from the N-terminus, the 378-residue chain is Chaperone protein DnaJ (378 aa).

Residues 5 to 70 enclose the J domain; that stretch reads DYYEVLGVAK…QKRAAYDQYG (66 aa). The segment at 138–216 adopts a CR-type zinc-finger fold; that stretch reads GYDTQIRVPS…CHGSGKVKET (79 aa). Zn(2+)-binding residues include cysteine 151, cysteine 154, cysteine 168, cysteine 171, cysteine 190, cysteine 193, cysteine 204, and cysteine 207. CXXCXGXG motif repeat units follow at residues 151–158, 168–175, 190–197, and 204–211; these read CEVCHGSG, CPTCHGQG, CPKCHGTG, and CVHCHGSG.

The protein belongs to the DnaJ family. In terms of assembly, homodimer. The cofactor is Zn(2+).

Its subcellular location is the cytoplasm. In terms of biological role, participates actively in the response to hyperosmotic and heat shock by preventing the aggregation of stress-denatured proteins and by disaggregating proteins, also in an autonomous, DnaK-independent fashion. Unfolded proteins bind initially to DnaJ; upon interaction with the DnaJ-bound protein, DnaK hydrolyzes its bound ATP, resulting in the formation of a stable complex. GrpE releases ADP from DnaK; ATP binding to DnaK triggers the release of the substrate protein, thus completing the reaction cycle. Several rounds of ATP-dependent interactions between DnaJ, DnaK and GrpE are required for fully efficient folding. Also involved, together with DnaK and GrpE, in the DNA replication of plasmids through activation of initiation proteins. The protein is Chaperone protein DnaJ of Burkholderia ambifaria (strain MC40-6).